The chain runs to 304 residues: MNRLAVEIPGLSLKNPIMPASGCFGFGQEYSKYYDLNELGAIMAKAVTPEPRLGNPTPRVAETASGMLNAIGLQNPGLEHVLAHELPFLEQFETPIIANVAGATEDDYVQVCARIGESKAVKAIELNISCPNVKHGGIAFGTDPEVAHRLTKAVKNVATVPVYVKLSPNVADIVSIAQAIEAAGADGLTMINTLLGMRIDLKTRKPIIANGTGGLSGPAIKPVAIRMIHQVRAVSNIPIIGMGGVQTVDDVLEFLIAGADAVAVGTMNFTDPFICPKLISELPKRMDELGISSLQELKKERANQ.

FMN-binding positions include Ser21 and 45–46 (KA). Residues Lys45 and 69–73 (NAIGL) each bind substrate. Positions 99 and 127 each coordinate FMN. Asn127 lines the substrate pocket. Residue Cys130 is the Nucleophile of the active site. FMN is bound by residues Lys165 and Ile191. 192-193 (NT) serves as a coordination point for substrate. FMN is bound by residues Gly217, 243–244 (GG), and 265–266 (GT).

Belongs to the dihydroorotate dehydrogenase family. Type 1 subfamily. Heterotetramer of 2 PyrK and 2 PyrD type B subunits. The cofactor is FMN.

It is found in the cytoplasm. It catalyses the reaction (S)-dihydroorotate + NAD(+) = orotate + NADH + H(+). It participates in pyrimidine metabolism; UMP biosynthesis via de novo pathway; orotate from (S)-dihydroorotate (NAD(+) route): step 1/1. Functionally, catalyzes the conversion of dihydroorotate to orotate with NAD(+) as electron acceptor. The chain is Dihydroorotate dehydrogenase B (NAD(+)), catalytic subunit (pyrD) from Listeria monocytogenes serotype 4a (strain HCC23).